Consider the following 815-residue polypeptide: Phenylalanine--tRNA ligase beta subunit (815 aa).

Residues 39-148 form the tRNA-binding domain; sequence SKELQKFEVA…KDAVVGDNFT (110 aa). Positions 421–496 constitute a B5 domain; it reads PQKKPLDFSV…RIYGYDKIES (76 aa). 4 residues coordinate Mg(2+): Asp474, Asp480, Glu483, and Glu484. Positions 721-814 constitute an FDX-ACB domain; sequence SDYQANFRDY…ISQKFQGILR (94 aa).

The protein belongs to the phenylalanyl-tRNA synthetase beta subunit family. Type 1 subfamily. As to quaternary structure, tetramer of two alpha and two beta subunits. Mg(2+) is required as a cofactor.

Its subcellular location is the cytoplasm. The catalysed reaction is tRNA(Phe) + L-phenylalanine + ATP = L-phenylalanyl-tRNA(Phe) + AMP + diphosphate + H(+). This is Phenylalanine--tRNA ligase beta subunit (pheT) from Rickettsia prowazekii (strain Madrid E).